Consider the following 149-residue polypeptide: D-aminoacyl-tRNA deacylase (149 aa).

Positions 137 to 138 match the Gly-cisPro motif, important for rejection of L-amino acids motif; it reads GP.

The protein belongs to the DTD family. As to quaternary structure, homodimer.

The protein resides in the cytoplasm. The catalysed reaction is glycyl-tRNA(Ala) + H2O = tRNA(Ala) + glycine + H(+). It catalyses the reaction a D-aminoacyl-tRNA + H2O = a tRNA + a D-alpha-amino acid + H(+). An aminoacyl-tRNA editing enzyme that deacylates mischarged D-aminoacyl-tRNAs. Also deacylates mischarged glycyl-tRNA(Ala), protecting cells against glycine mischarging by AlaRS. Acts via tRNA-based rather than protein-based catalysis; rejects L-amino acids rather than detecting D-amino acids in the active site. By recycling D-aminoacyl-tRNA to D-amino acids and free tRNA molecules, this enzyme counteracts the toxicity associated with the formation of D-aminoacyl-tRNA entities in vivo and helps enforce protein L-homochirality. In Clostridium botulinum (strain Kyoto / Type A2), this protein is D-aminoacyl-tRNA deacylase.